A 393-amino-acid polypeptide reads, in one-letter code: G protein-activated inward rectifier potassium channel 3 (393 aa).

Positions 1 to 23 (MAQENAAFSPGSEEPPRRRGRQR) are disordered. The Cytoplasmic portion of the chain corresponds to 1 to 57 (MAQENAAFSPGSEEPPRRRGRQRYVEKDGRCNVQQGNVRETYRYLTDLFTTLVDLQW). The helical transmembrane segment at 58-82 (RLSLLFFVLAYALTWLFFGAIWWLI) threads the bilayer. Residues 83-106 (AYGRGDLEHLEDTAWTPCVNNLNG) are Extracellular-facing. The helical; Pore-forming intramembrane region spans 107-118 (FVAAFLFSIETE). Positions 119–125 (TTIGYGH) form an intramembrane region, pore-forming. Positions 120–125 (TIGYGH) match the Selectivity filter motif. The Extracellular portion of the chain corresponds to 126–134 (RVITDQCPE). Residues 135–156 (GIVLLLLQAILGSMVNAFMVGC) form a helical membrane-spanning segment. At 157–393 (MFVKISQPNK…LPPPESESKV (237 aa)) the chain is on the cytoplasmic side. Residues 360-393 (KVEEEGAGEGAGAGDGADKEQNGCLPPPESESKV) form a disordered region. Pro residues predominate over residues 384–393 (LPPPESESKV). A PDZ-binding motif is present at residues 390-393 (ESKV).

The protein belongs to the inward rectifier-type potassium channel (TC 1.A.2.1) family. KCNJ9 subfamily. In terms of assembly, associates with KCNJ3/GIRK1 to form a G-protein-activated heteromultimer pore-forming unit. Interacts (via PDZ-binding motif) with SNX27 (via PDZ domain); the interaction is required when endocytosed to prevent degradation in lysosomes and promote recycling to the plasma membrane.

It localises to the membrane. It carries out the reaction K(+)(in) = K(+)(out). Functionally, this receptor is controlled by G proteins. Inward rectifier potassium channels are characterized by a greater tendency to allow potassium to flow into the cell rather than out of it. Their voltage dependence is regulated by the concentration of extracellular potassium; as external potassium is raised, the voltage range of the channel opening shifts to more positive voltages. The inward rectification is mainly due to the blockage of outward current by internal magnesium. Unable to produce channel activity when expressed alone but forms a functional channel in association with KCNJ3/GIRK1. In Rattus norvegicus (Rat), this protein is G protein-activated inward rectifier potassium channel 3 (Kcnj9).